Reading from the N-terminus, the 331-residue chain is Fructose-1,6-bisphosphatase class 1 (331 aa).

Residues Glu-100, Asp-120, Leu-122, and Asp-123 each contribute to the Mg(2+) site. Substrate is bound by residues 123–126, Asn-216, Tyr-243, 261–263, and Lys-273; these read DGSS and YLY. Glu-279 serves as a coordination point for Mg(2+).

This sequence belongs to the FBPase class 1 family. Homotetramer. Requires Mg(2+) as cofactor.

Its subcellular location is the cytoplasm. It carries out the reaction beta-D-fructose 1,6-bisphosphate + H2O = beta-D-fructose 6-phosphate + phosphate. It participates in carbohydrate biosynthesis; gluconeogenesis. This chain is Fructose-1,6-bisphosphatase class 1, found in Amoebophilus asiaticus (strain 5a2).